Reading from the N-terminus, the 1256-residue chain is Bifunctional autolysin (1256 aa).

Residues 1–29 (MAKKFNYKLPSMVALTLVGSAVTAHQVQA) form the signal peptide. The segment covering 103–138 (GDTRANQSATTNNTQPVAKSTSTTAPKTNTNVTNAG) has biased composition (polar residues). Disordered regions lie at residues 103–151 (GDTR…NSEN), 172–214 (KTAA…KTSL), and 419–440 (TQST…PSTG). 2 stretches are compositionally biased toward low complexity: residues 172 to 196 (KTAA…KVTT) and 421 to 439 (STTT…KPST). Residues 199-775 (ASAQPRSVAA…AVAQPKTAVK (577 aa)) form an N-acetylmuramoyl-L-alanine amidase region. 7 consecutive GW domains span residues 443–517 (TVAA…YNTA), 519–593 (SPVN…DTAK), 612–686 (TVSS…YNNA), 688–762 (SPVN…VPAA), 784–859 (TTQT…VQNL), 861–936 (KEVK…APTA), and 943–1017 (AAKD…KELI). The interval 776–1256 (AYTVTKPQTT…GKYFDIPQYK (481 aa)) is endo-beta-N-acetylglucosaminidase.

This sequence in the N-terminal section; belongs to the N-acetylmuramoyl-L-alanine amidase 2 family. It in the C-terminal section; belongs to the glycosyl hydrolase 73 family. As to quaternary structure, oligomer; forms a ring structure at the cell surface which is important for efficient partitioning of daughter cells after cell division. In terms of processing, undergoes proteolytic processing to generate the two extracellular lytic enzymes, probably at the septal region on the cell surface.

It is found in the secreted. The catalysed reaction is Hydrolyzes the link between N-acetylmuramoyl residues and L-amino acid residues in certain cell-wall glycopeptides.. The enzyme catalyses an N(4)-(oligosaccharide-(1-&gt;3)-[oligosaccharide-(1-&gt;6)]-beta-D-Man-(1-&gt;4)-beta-D-GlcNAc-(1-&gt;4)-alpha-D-GlcNAc)-L-asparaginyl-[protein] + H2O = an oligosaccharide-(1-&gt;3)-[oligosaccharide-(1-&gt;6)]-beta-D-Man-(1-&gt;4)-D-GlcNAc + N(4)-(N-acetyl-beta-D-glucosaminyl)-L-asparaginyl-[protein]. Functionally, endohydrolysis of the di-N-acetylchitobiosyl unit in high-mannose glycopeptides and glycoproteins containing the -[(Man)5(GlcNAc)2]-Asn structure. One N-acetyl-D-glucosamine residue remains attached to the protein; the rest of the oligosaccharide is released intact. Cleaves the peptidoglycan connecting the daughter cells at the end of the cell division cycle, resulting in the separation of the two newly divided cells. Acts as an autolysin in penicillin-induced lysis. The chain is Bifunctional autolysin (atl) from Staphylococcus aureus (strain NCTC 8325 / PS 47).